The following is a 211-amino-acid chain: Holliday junction branch migration complex subunit RuvA (211 aa).

Positions 1–70 are domain I; that stretch reads MIQFLQGQVV…QDQIALFGFG (70 aa). Positions 71–149 are domain II; the sequence is RLAERDLFGQ…QWHKLQMGTG (79 aa). The segment at 150–158 is flexible linker; the sequence is ETDSTLPTT. The domain III stretch occupies residues 158 to 211; the sequence is TALLEDLEMTLLALGYTQTEIQQAIAMVSQVPDVAQSEDPEVWIRQAIGWLSDH.

Belongs to the RuvA family. In terms of assembly, homotetramer. Forms an RuvA(8)-RuvB(12)-Holliday junction (HJ) complex. HJ DNA is sandwiched between 2 RuvA tetramers; dsDNA enters through RuvA and exits via RuvB. An RuvB hexamer assembles on each DNA strand where it exits the tetramer. Each RuvB hexamer is contacted by two RuvA subunits (via domain III) on 2 adjacent RuvB subunits; this complex drives branch migration. In the full resolvosome a probable DNA-RuvA(4)-RuvB(12)-RuvC(2) complex forms which resolves the HJ.

It is found in the cytoplasm. Functionally, the RuvA-RuvB-RuvC complex processes Holliday junction (HJ) DNA during genetic recombination and DNA repair, while the RuvA-RuvB complex plays an important role in the rescue of blocked DNA replication forks via replication fork reversal (RFR). RuvA specifically binds to HJ cruciform DNA, conferring on it an open structure. The RuvB hexamer acts as an ATP-dependent pump, pulling dsDNA into and through the RuvAB complex. HJ branch migration allows RuvC to scan DNA until it finds its consensus sequence, where it cleaves and resolves the cruciform DNA. The protein is Holliday junction branch migration complex subunit RuvA of Synechocystis sp. (strain ATCC 27184 / PCC 6803 / Kazusa).